The chain runs to 969 residues: Chromosome transmission fidelity protein 18 homolog (969 aa).

The disordered stretch occupies residues 30–97; the sequence is EGTRDQAPPG…APSSPMVKRP (68 aa). At Thr-51 the chain carries Phosphothreonine. Ser-221 carries the phosphoserine modification. 2 disordered regions span residues 250–269 and 318–340; these read SEGE…APGQ and RKPR…GKWK. Residues 257-268 show a composition bias toward low complexity; the sequence is LEGPPAEEPAPG. 369–376 is a binding site for ATP; sequence GPPGLGKT. Residues 856-889 are disordered; the sequence is ARSGPQVDQGSSGPASLWTDSGEKGTRQPAPRNH. The segment covering 876–889 has biased composition (basic and acidic residues); it reads SGEKGTRQPAPRNH.

The protein belongs to the activator 1 small subunits family. CTF18 subfamily. As to quaternary structure, component of the CTF18-RFC complex, which consists of CTF18, CTF8, DCC1, RFC2, RFC3, RFC4 and RFC5. During assembly of the CTF18-RFC complex, CTF18 may first assemble into a subcomplex with RFC2, RFC3, RFC4 and RFC5. CTF18 then interacts directly with CTF8, which in turn interacts with DCC1. The CTF18-RFC complex associates with PCNA and with DNA polymerase POLH. The CTF18-RFC complex does not interact with the Rad9/Rad1/Hus1 complex. CTF18 interacts with SMC1A and RAD21. Interacts with DDX11.

The protein resides in the nucleus. In terms of biological role, chromosome cohesion factor involved in sister chromatid cohesion and fidelity of chromosome transmission. Component of one of the cell nuclear antigen loader complexes, CTF18-replication factor C (CTF18-RFC), which consists of CTF18, CTF8, DCC1, RFC2, RFC3, RFC4 and RFC5. The CTF18-RFC complex binds to single-stranded and primed DNAs and has weak ATPase activity that is stimulated by the presence of primed DNA, replication protein A (RPA) and by proliferating cell nuclear antigen (PCNA). The CTF18-RFC complex catalyzes the ATP-dependent loading of PCNA onto primed and gapped DNA. Interacts with and stimulates DNA polymerase POLH. During DNA repair synthesis, involved in loading DNA polymerase POLE at the sites of local damage. This is Chromosome transmission fidelity protein 18 homolog (Chtf18) from Mus musculus (Mouse).